The chain runs to 257 residues: Undecaprenyl-diphosphatase (257 aa).

The next 8 helical transmembrane spans lie at 4–24, 51–71, 78–98, 106–126, 133–153, 171–191, 207–227, and 235–255; these read LFKA…PISS, HVGT…NIFF, LFII…HDLI, LIIV…EKVG, ITLS…IPGV, AYAA…AAML, LFII…KFLL, and LNLF…LYFF.

The protein belongs to the UppP family.

The protein resides in the cell inner membrane. It carries out the reaction di-trans,octa-cis-undecaprenyl diphosphate + H2O = di-trans,octa-cis-undecaprenyl phosphate + phosphate + H(+). Catalyzes the dephosphorylation of undecaprenyl diphosphate (UPP). Confers resistance to bacitracin. The protein is Undecaprenyl-diphosphatase of Thermodesulfovibrio yellowstonii (strain ATCC 51303 / DSM 11347 / YP87).